The sequence spans 392 residues: MPLEVVVELQIRAISCPGVFLPGKQDVYLGVYLMNQYLETNSFPSAFPIMIQESMRFEKVFESAVDPGAVVDLLEMWDELAYYEENTRDFLFPEPKLTPSHPRRCREVLMKTALGFPGIAPKIEFSTRTAIRECVFLHRNRFLEERHESRRPLSTSHEPIFPLNTIKMKLKENNLNRLPKGMQARAPSQYSTRHFFQDQPAQLNLGNNFKISGGSKPPFVVRHVDSAKPFGENISEHHLRRSRRKSKFSDFPFPTRRASSLDSLAANVKVIKEPDERIVLRSDSSSCLDSSQFGKSSSSKQGDADFHGKASFATYQHSTSPGPLDQPLLRERFHPGSQSTWKNIHERVCSLLTSHRAQLHQNKEDSTSEVNYIIERPSYPLKKYSLHEQRYF.

2 positions are modified to phosphoserine: serine 260 and serine 263. Low complexity predominate over residues 286–301 (SCLDSSQFGKSSSSKQ). The tract at residues 286 to 305 (SCLDSSQFGKSSSSKQGDAD) is disordered.

The protein belongs to the SPATA6 family.

This Homo sapiens (Human) protein is Spermatogenesis associated 6-like protein (SPATA6L).